The following is a 519-amino-acid chain: Flavin-dependent halogenase rdc2 (519 aa).

Residues 1–21 (MSVPKSCTILVAGGGPAGSYA) form the signal peptide. FAD is bound by residues glycine 14, alanine 17, and glutamate 47. 2 residues coordinate chloride: serine 324 and glycine 325.

It belongs to the flavin-dependent halogenase family.

Its pathway is secondary metabolite biosynthesis. Its function is as follows. Flavin-dependent halogenase; part of the gene cluster that mediates the biosynthesis of radicicol, a resorcylic acid lactone (RAL) that irreversibly inhibits the HSP90 molecular chaperone, an important target for cancer chemotherapy. Within the cluster, rdc2 is involved in the chlorination of the resorcylic acid lactone (RAL) structure to convert monocillin I into radicicol. Also chlorinates monocillin II to produce 6-cholomonocillin II and monocilllin IV to produce 13-chloromonocillin IV. In contrast to most fungal halogenases, rdc2 has a broad substrate specificity and can accept a variety of macrolactones as the substrates to generate chlorinated derivatives, including dihydroresorcylide, zearalenone, curvularin, or even curcumin. Rdc2 is able to dichlorinate dihydroresorcylide and monocillin IV. Dihydroresorcylide is first chlorinated at position 11 to produce 11-chlorodihydroresorcylide which can be further chlorinated by rdc2 at possition 13. Mororeover, rdc2 can incorporate bromine into dihydroresorcylide to yield the corresponding mono- and di-brominated derivatives. Finally, rdc2 is also able to halogenate the isoquinolines 4-hydroxyisoquinoline and 6-hydroxyisoquinoline into 3-chloro-4-hydroxyisoquinoline and 5-chloro-6-hydroxyisoquinoline, respectively. The radicicol cluster encodes only two apparent post-PKS enzymes, a cytochrome P450 monooxygenase (rdc4) and a non-heme halogenase (rdc2) that could introduce the epoxide and the chlorine, respectively. If this cluster includes all the genes required for radicicol biosynthesis, the remaining structural features of radicicol are presumably generated by the PKSs rdc1 and rdc5. The C-2' ketone could arise if the R-PKS rdc5 and NR-PKS rdc1 each carry out four iterations, in contrast to the five iteration-three iteration split for the hypothemycin PKSs. The origin of the cis 5',6' double bond is not known. The radicicol R-PKS rdc5 ER domain may catalyze either double bond isomerization or reduction in the third iteration. This is Flavin-dependent halogenase rdc2 from Metacordyceps chlamydosporia (Nematophagous fungus).